The sequence spans 320 residues: mRNA decay activator protein ZFP36 (320 aa).

A necessary for nuclear export region spans residues 1 to 15 (MDLSAIYESLMSMSH). A necessary and sufficient for the association with mRNA decay enzymes and mRNA decay activation region spans residues 1 to 93 (MDLSAIYESL…PTSPTATPTT (93 aa)). Necessary for localization of ARE-containing mRNAs to processing bodies (PBs) stretches follow at residues 1–167 (MDLS…DLAL) and 93–320 (TSSR…SVSE). Positions 17-50 (LSPDHGGTESSGGLWNINSSDSIPSGVTSRLTGR) are disordered. Residues 27-50 (SGGLWNINSSDSIPSGVTSRLTGR) show a composition bias toward polar residues. At serine 53 the chain carries Phosphoserine; by MAPKAPK2. Position 59 is a phosphoserine (serine 59). One copy of the P-P-P-P-G repeat lies at 64–68 (PPPPG). A compositionally biased stretch (pro residues) spans 66-85 (PPGFAPLAPRPGPELSPSPT). Residues 66-95 (PPGFAPLAPRPGPELSPSPTSPTATPTTSS) form a disordered region. Serine 81 and serine 83 each carry phosphoserine. Phosphothreonine is present on threonine 85. Residue serine 86 is modified to Phosphoserine. Over residues 86–95 (SPTATPTTSS) the composition is skewed to low complexity. The necessary for nuclear localization stretch occupies residues 88–161 (TATPTTSSRY…GSRCHFIHNP (74 aa)). Residues 90–166 (TPTTSSRYKT…FIHNPTEDLA (77 aa)) form a necessary for RNA-binding region. C3H1-type zinc fingers lie at residues 96 to 124 (RYKTELCRTYSESGRCRYGAKCQFAHGPG) and 134 to 162 (KYKTELCHKFYLQGRCPYGSRCHFIHNPT). The segment at 96–187 (RYKTELCRTY…ISFSGLPSGR (92 aa)) is necessary for interaction with PABPN1. A necessary for mRNA decay activation region spans residues 167–320 (LPGQPHVLRQ…PIFNRISVSE (154 aa)). At serine 179 the chain carries Phosphoserine; by MAPKAPK2. Residues 180–310 (FSGLPSGRRT…PQPPAPPRRL (131 aa)) form a disordered region. Phosphoserine is present on serine 190. The P-P-P-P-G repeat unit spans residues 191–195 (PPPPG). The span at 197-209 (SGPSLSSCSFSPS) shows a compositional bias: low complexity. Serine 211 bears the Phosphoserine mark. The P-P-P-P-G repeat unit spans residues 212–216 (PPPPG). Phosphoserine; by MAPK1; in vitro is present on serine 221. Threonine 251 carries the phosphothreonine modification. Phosphoserine occurs at positions 270 and 290. Low complexity predominate over residues 280–290 (SSGSSLGGSDS). Pro residues predominate over residues 300–309 (PPQPPAPPRR). The tract at residues 306–320 (PPRRLPIFNRISVSE) is interaction with CNOT1. A Phosphoserine modification is found at serine 317.

As to quaternary structure, associates with cytoplasmic CCR4-NOT and PAN2-PAN3 deadenylase complexes to trigger ARE-containing mRNA deadenylation and decay processes. Part of a mRNA decay activation complex at least composed of poly(A)-specific exoribonucleases CNOT6, EXOSC2 and XRN1 and mRNA-decapping enzymes DCP1A and DCP2. Associates with the RNA exosome complex. Interacts (via phosphorylated form) with 14-3-3 proteins; these interactions promote exclusion of ZFP36 from cytoplasmic stress granules in response to arsenite treatment in a MAPKAPK2-dependent manner and does not prevent CCR4-NOT deadenylase complex recruitment or ZFP36-induced ARE-containing mRNA deadenylation and decay processes. Interacts with 14-3-3 proteins; these interactions occur in response to rapamycin in an Akt-dependent manner. Interacts with AGO2 and AGO4. Interacts (via C-terminus) with CNOT1; this interaction occurs in a RNA-independent manner and induces mRNA deadenylation. Interacts (via N-terminus) with CNOT6. Interacts with CNOT6L. Interacts (via C-terminus) with CNOT7; this interaction occurs in a RNA-independent manner, induces mRNA deadenylation and is inhibited in a phosphorylation MAPKAPK2-dependent manner. Interacts (via unphosphorylated form) with CNOT8; this interaction occurs in a RNA-independent manner and is inhibited in a phosphorylation MAPKAPK2-dependent manner. Interacts with DCP1A. Interacts (via N-terminus) with DCP2. Interacts with EDC3. Interacts (via N-terminus) with EXOSC2. Interacts with heat shock 70 kDa proteins. Interacts with KHSRP; this interaction increases upon cytokine-induced treatment. Interacts with MAP3K4; this interaction enhances the association with SH3KBP1/CIN85. Interacts with MAPKAPK2; this interaction occurs upon skeletal muscle satellite cell activation. Interacts with NCL. Interacts with NUP214; this interaction increases upon lipopolysaccharide (LPS) stimulation. Interacts with PABPC1; this interaction occurs in a RNA-dependent manner. Interacts (via hypophosphorylated form) with PABPN1 (via RRM domain and C-terminal arginine-rich region); this interaction occurs in the nucleus in a RNA-independent manner, decreases in presence of single-stranded poly(A) RNA-oligomer and in a p38 MAPK-dependent-manner and inhibits nuclear poly(A) tail synthesis. Interacts with PAN2. Interacts (via C3H1-type zinc finger domains) with PKM. Interacts (via C3H1-type zinc finger domains) with nuclear RNA poly(A) polymerase. Interacts with PPP2CA; this interaction occurs in LPS-stimulated cells and induces ZFP36 dephosphorylation, and hence may promote ARE-containing mRNAs decay. Interacts (via C-terminus) with PRR5L (via C-terminus); this interaction may accelerate ZFP36-mediated mRNA decay during stress. Interacts (via C-terminus) with SFN; this interaction occurs in a phosphorylation-dependent manner. Interacts (via extreme C-terminal region) with SH3KBP1/CIN85 (via SH3 domains); this interaction enhances MAP3K4-induced phosphorylation of ZFP36 at Ser-59 and Ser-86 and does not alter neither ZFP36 binding to ARE-containing transcripts nor TNF-alpha mRNA decay. Interacts with XRN1. Interacts (via C-terminus and Ser-179 phosphorylated form) with YWHAB; this interaction occurs in a p38/MAPKAPK2-dependent manner, increases cytoplasmic localization of ZFP36 and protects ZFP36 from Ser-179 dephosphorylation by serine/threonine phosphatase 2A, and hence may be crucial for stabilizing ARE-containing mRNAs. Interacts (via phosphorylated form) with YWHAE. Interacts (via C-terminus) with YWHAG; this interaction occurs in a phosphorylation-dependent manner. Interacts with YWHAH; this interaction occurs in a phosphorylation-dependent manner. Interacts with YWHAQ; this interaction occurs in a phosphorylation-dependent manner. Interacts with (via C-terminus) YWHAZ; this interaction occurs in a phosphorylation-dependent manner. Does not interact with SH3KBP1. Interacts (via P-P-P-P-G repeats) with GIGYF2; the interaction is direct. In terms of processing, phosphorylated. Phosphorylation at serine and/or threonine residues occurs in a p38 MAPK- and MAPKAPK2-dependent manner. Phosphorylated by MAPKAPK2 at Ser-53 and Ser-179; phosphorylation increases its stability and cytoplasmic localization, promotes binding to 14-3-3 adapter proteins and inhibits the recruitment of cytoplasmic CCR4-NOT and PAN2-PAN3 deadenylase complexes to the mRNA decay machinery, thereby inhibiting ZFP36-induced ARE-containing mRNA deadenylation and decay processes. Phosphorylation by MAPKAPK2 does not impair ARE-containing RNA-binding. Phosphorylated in a MAPKAPK2- and p38 MAPK-dependent manner upon skeletal muscle satellite cell activation; this phosphorylation inhibits ZFP36-mediated mRNA decay activity, and hence stabilizes MYOD1 mRNA. Phosphorylated by MAPK1 upon mitogen stimulation. Phosphorylated at Ser-59 and Ser-86; these phosphorylations increase in a SH3KBP1-dependent manner. Phosphorylated at serine and threonine residues in a pyruvate kinase PKM- and p38 MAPK-dependent manner. Phosphorylation at Ser-53 may participate in the PKM-mediated degradation of ZFP36 in a p38 MAPK-dependent manner. Dephosphorylated by serine/threonine phosphatase 2A at Ser-179. Post-translationally, ubiquitinated; pyruvate kinase (PKM)-dependent ubiquitination leads to proteasomal degradation through a p38 MAPK signaling pathway.

Its subcellular location is the nucleus. The protein localises to the cytoplasm. It is found in the cytoplasmic granule. The protein resides in the P-body. In terms of biological role, zinc-finger RNA-binding protein that destabilizes numerous cytoplasmic AU-rich element (ARE)-containing mRNA transcripts by promoting their poly(A) tail removal or deadenylation, and hence provide a mechanism for attenuating protein synthesis. Acts as an 3'-untranslated region (UTR) ARE mRNA-binding adapter protein to communicate signaling events to the mRNA decay machinery. Recruits deadenylase CNOT7 (and probably the CCR4-NOT complex) via association with CNOT1, and hence promotes ARE-mediated mRNA deadenylation. Also functions by recruiting components of the cytoplasmic RNA decay machinery to the bound ARE-containing mRNAs. Self regulates by destabilizing its own mRNA. Binds to 3'-UTR ARE of numerous mRNAs. Also binds to ARE of its own mRNA. Plays a role in anti-inflammatory responses; suppresses tumor necrosis factor (TNF)-alpha production by stimulating ARE-mediated TNF-alpha mRNA decay and several other inflammatory ARE-containing mRNAs in interferon (IFN)- and/or lipopolysaccharide (LPS)-induced macrophages. Also plays a role in the regulation of dendritic cell maturation at the post-transcriptional level, and hence operates as part of a negative feedback loop to limit the inflammatory response. Promotes ARE-mediated mRNA decay of hypoxia-inducible factor HIF1A mRNA during the response of endothelial cells to hypoxia. Positively regulates early adipogenesis of preadipocytes by promoting ARE-mediated mRNA decay of immediate early genes (IEGs). Negatively regulates hematopoietic/erythroid cell differentiation by promoting ARE-mediated mRNA decay of the transcription factor STAT5B mRNA. Plays a role in maintaining skeletal muscle satellite cell quiescence by promoting ARE-mediated mRNA decay of the myogenic determination factor MYOD1 mRNA. Also associates with and regulates the expression of non-ARE-containing target mRNAs at the post-transcriptional level, such as MHC class I mRNAs. Participates in association with argonaute RISC catalytic components in the ARE-mediated mRNA decay mechanism; assists microRNA (miRNA) targeting ARE-containing mRNAs. May also play a role in the regulation of cytoplasmic mRNA decapping; enhances decapping of ARE-containing RNAs, in vitro. Involved in the delivery of target ARE-mRNAs to processing bodies (PBs). In addition to its cytosolic mRNA-decay function, affects nuclear pre-mRNA processing. Negatively regulates nuclear poly(A)-binding protein PABPN1-stimulated polyadenylation activity on ARE-containing pre-mRNA during LPS-stimulated macrophages. Also involved in the regulation of stress granule (SG) and P-body (PB) formation and fusion. Plays a role in the regulation of keratinocyte proliferation, differentiation and apoptosis. Plays a role as a tumor suppressor by inhibiting cell proliferation in breast cancer cells. The protein is mRNA decay activator protein ZFP36 of Rattus norvegicus (Rat).